The primary structure comprises 433 residues: Serine--tRNA ligase (433 aa).

Residue 235–237 (TSE) participates in L-serine binding. An ATP-binding site is contributed by 266–268 (RSE). Residue Glu289 coordinates L-serine. 353 to 356 (EISS) contributes to the ATP binding site. Ser388 is an L-serine binding site.

The protein belongs to the class-II aminoacyl-tRNA synthetase family. Type-1 seryl-tRNA synthetase subfamily. As to quaternary structure, homodimer. The tRNA molecule binds across the dimer.

The protein localises to the cytoplasm. The enzyme catalyses tRNA(Ser) + L-serine + ATP = L-seryl-tRNA(Ser) + AMP + diphosphate + H(+). It carries out the reaction tRNA(Sec) + L-serine + ATP = L-seryl-tRNA(Sec) + AMP + diphosphate + H(+). Its pathway is aminoacyl-tRNA biosynthesis; selenocysteinyl-tRNA(Sec) biosynthesis; L-seryl-tRNA(Sec) from L-serine and tRNA(Sec): step 1/1. Functionally, catalyzes the attachment of serine to tRNA(Ser). Is also able to aminoacylate tRNA(Sec) with serine, to form the misacylated tRNA L-seryl-tRNA(Sec), which will be further converted into selenocysteinyl-tRNA(Sec). The protein is Serine--tRNA ligase of Burkholderia vietnamiensis (strain G4 / LMG 22486) (Burkholderia cepacia (strain R1808)).